Reading from the N-terminus, the 385-residue chain is Probable tRNA sulfurtransferase (385 aa).

The region spanning 57-160 (DGVIERVKKV…RGNAYVFTDK (104 aa)) is the THUMP domain. Residues 180–181 (ML), 205–206 (YY), arginine 262, glycine 284, and glutamine 293 each bind ATP.

Belongs to the ThiI family.

It localises to the cytoplasm. It catalyses the reaction [ThiI sulfur-carrier protein]-S-sulfanyl-L-cysteine + a uridine in tRNA + 2 reduced [2Fe-2S]-[ferredoxin] + ATP + H(+) = [ThiI sulfur-carrier protein]-L-cysteine + a 4-thiouridine in tRNA + 2 oxidized [2Fe-2S]-[ferredoxin] + AMP + diphosphate. It carries out the reaction [ThiS sulfur-carrier protein]-C-terminal Gly-Gly-AMP + S-sulfanyl-L-cysteinyl-[cysteine desulfurase] + AH2 = [ThiS sulfur-carrier protein]-C-terminal-Gly-aminoethanethioate + L-cysteinyl-[cysteine desulfurase] + A + AMP + 2 H(+). Its pathway is cofactor biosynthesis; thiamine diphosphate biosynthesis. Catalyzes the ATP-dependent transfer of a sulfur to tRNA to produce 4-thiouridine in position 8 of tRNAs, which functions as a near-UV photosensor. Also catalyzes the transfer of sulfur to the sulfur carrier protein ThiS, forming ThiS-thiocarboxylate. This is a step in the synthesis of thiazole, in the thiamine biosynthesis pathway. The sulfur is donated as persulfide by IscS. In Clostridium perfringens (strain ATCC 13124 / DSM 756 / JCM 1290 / NCIMB 6125 / NCTC 8237 / Type A), this protein is Probable tRNA sulfurtransferase.